The chain runs to 382 residues: Dual-specificity RNA methyltransferase RlmN (382 aa).

Residue E94 is the Proton acceptor of the active site. Residues 100–336 (EANRGTLCVS…NTITRKTRGD (237 aa)) enclose the Radical SAM core domain. C107 and C342 are disulfide-bonded. C114, C118, and C121 together coordinate [4Fe-4S] cluster. Residues 168–169 (GE), S200, 222–224 (SLH), and N299 contribute to the S-adenosyl-L-methionine site. C342 functions as the S-methylcysteine intermediate in the catalytic mechanism.

The protein belongs to the radical SAM superfamily. RlmN family. The cofactor is [4Fe-4S] cluster.

Its subcellular location is the cytoplasm. It carries out the reaction adenosine(2503) in 23S rRNA + 2 reduced [2Fe-2S]-[ferredoxin] + 2 S-adenosyl-L-methionine = 2-methyladenosine(2503) in 23S rRNA + 5'-deoxyadenosine + L-methionine + 2 oxidized [2Fe-2S]-[ferredoxin] + S-adenosyl-L-homocysteine. The enzyme catalyses adenosine(37) in tRNA + 2 reduced [2Fe-2S]-[ferredoxin] + 2 S-adenosyl-L-methionine = 2-methyladenosine(37) in tRNA + 5'-deoxyadenosine + L-methionine + 2 oxidized [2Fe-2S]-[ferredoxin] + S-adenosyl-L-homocysteine. Specifically methylates position 2 of adenine 2503 in 23S rRNA and position 2 of adenine 37 in tRNAs. m2A2503 modification seems to play a crucial role in the proofreading step occurring at the peptidyl transferase center and thus would serve to optimize ribosomal fidelity. The chain is Dual-specificity RNA methyltransferase RlmN from Legionella pneumophila (strain Lens).